Reading from the N-terminus, the 106-residue chain is Putative membrane protein insertion efficiency factor (106 aa).

The protein belongs to the UPF0161 family.

It is found in the cell inner membrane. Functionally, could be involved in insertion of integral membrane proteins into the membrane. The polypeptide is Putative membrane protein insertion efficiency factor (Acinetobacter baumannii (strain SDF)).